Here is a 748-residue protein sequence, read N- to C-terminus: MSNPGGRRNGPVKLRLTVLCAKNLVKKDFFRLPDPFAKVVVDGSGQCHSTDTVKNTLDPKWNQHYDLYIGKSDSVTISVWNHKKIHKKQGAGFLGCVRLLSNAINRLKDTGYQRLDLCKLGPNDNDTVRGQIVVSLQSRDRIGTGGQVVDCSRLFDNDLPDGWEERRTASGRIQYLNHITRTTQWERPTRPASEYSSPGRPLSCFVDENTPISGTNGATCGQSSDPRLAERRVRSQRHRNYMSRTHLHTPPDLPEGYEQRTTQQGQVYFLHTQTGVSTWHDPRVPRDLSNINCEELGPLPPGWEIRNTATGRVYFVDHNNRTTQFTDPRLSANLHLVLNRQNQLKDQQQQQVVSLCPDDTECLTVPRYKRDLVQKLKILRQELSQQQPQAGHCRIEVSREEIFEESYRQVMKMRPKDLWKRLMIKFRGEEGLDYGGVAREWLYLLSHEMLNPYYGLFQYSRDDIYTLQINPDSAVNPEHLSYFHFVGRIMGMAVFHGHYIDGGFTLPFYKQLLGKSITLDDMELVDPDLHNSLVWILENDITGVLDHTFCVEHNAYGEIIQHELKPNGKSIPVNEENKKEYVRLYVNWRFLRGIEAQFLALQKGFNEVIPQHLLKTFDEKELELIICGLGKIDVNDWKVNTRLKHCTPDSNIVKWFWKAVEFFDEERRARLLQFVTGSSRVPLQGFKALQGAAGPRLFTIHQIDACTNNLPKAHTCFNRIDIPPYESYEKLYEKLLTAIEETCGFAVE.

Residues 1-119 (MSNPGGRRNG…TGYQRLDLCK (119 aa)) enclose the C2 domain. A Glycyl lysine isopeptide (Lys-Gly) (interchain with G-Cter in ubiquitin) cross-link involves residue K119. WW domains are found at residues 157-190 (NDLPDGWEERRTASGRIQYLNHITRTTQWERPTR), 251-284 (PDLPEGYEQRTTQQGQVYFLHTQTGVSTWHDPRV), and 297-330 (GPLPPGWEIRNTATGRVYFVDHNNRTTQFTDPRL). The region spanning 414–748 (RPKDLWKRLM…IEETCGFAVE (335 aa)) is the HECT domain. C716 acts as the Glycyl thioester intermediate in catalysis.

Interacts (via WW domains) with SMAD1. Interacts (via WW domains) with SMAD2 (via PY-motif). Interacts (via WW domains) with SMAD3 (via PY-motif). Interacts with SMAD6. Interacts with SMAD7 (via PY-motif) and TGFBR1; SMAD7 recruits SMURF2 to the TGF-beta receptor and regulates its degradation. Does not interact with SMAD4; SMAD4 lacks a PY-motif. Interacts with AIMP1. Interacts with SNON. Interacts with STAMBP and RNF11. May interact with NDFIP1 and NDFIP2; this interaction induces the E3 ubiquitin-protein ligase activity. Interacts with TTC3. In terms of assembly, (Microbial infection) Interacts (via WW domains) with EBOV and MARV VP40 (via PPXY motif); the interaction facilitates VP40 virus-like particle budding. Auto-ubiquitinated and ubiquitinated in the presence of RNF11 and UBE2D1. Ubiquitinated by the SCF(FBXL15) complex and TTC3, leading to its degradation by the proteasome. 'Lys-48'-linked polyubiquitination mediated by TRAF4 at Lys-119 leads to SMURF2 proteasomal degradation. In terms of tissue distribution, widely expressed.

Its subcellular location is the nucleus. It localises to the cytoplasm. The protein localises to the cell membrane. It is found in the membrane raft. It carries out the reaction S-ubiquitinyl-[E2 ubiquitin-conjugating enzyme]-L-cysteine + [acceptor protein]-L-lysine = [E2 ubiquitin-conjugating enzyme]-L-cysteine + N(6)-ubiquitinyl-[acceptor protein]-L-lysine.. It functions in the pathway protein modification; protein ubiquitination. Activated by NDFIP1- and NDFIP2-binding. E3 ubiquitin-protein ligase which accepts ubiquitin from an E2 ubiquitin-conjugating enzyme in the form of a thioester and then directly transfers the ubiquitin to targeted substrates. Interacts with SMAD7 to trigger SMAD7-mediated transforming growth factor beta/TGF-beta receptor ubiquitin-dependent degradation, thereby down-regulating TGF-beta signaling. In addition, interaction with SMAD7 activates autocatalytic degradation, which is prevented by interaction with AIMP1. Also forms a stable complex with TGF-beta receptor-mediated phosphorylated SMAD1, SMAD2 and SMAD3, and targets SMAD1 and SMAD2 for ubiquitination and proteasome-mediated degradation. SMAD2 may recruit substrates, such as SNON, for ubiquitin-dependent degradation. Negatively regulates TGFB1-induced epithelial-mesenchymal transition and myofibroblast differentiation. In terms of biological role, (Microbial infection) In case of filoviruses Ebola/EBOV and Marburg/MARV infection, the complex formed by viral matrix protein VP40 and SMURF2 facilitates virus budding. The sequence is that of E3 ubiquitin-protein ligase SMURF2 from Homo sapiens (Human).